Reading from the N-terminus, the 527-residue chain is Bifunctional purine biosynthesis protein PurH (527 aa).

An MGS-like domain is found at 1 to 149 (MASDFLPVRR…KNFARVAVAT (149 aa)).

The protein belongs to the PurH family.

It catalyses the reaction (6R)-10-formyltetrahydrofolate + 5-amino-1-(5-phospho-beta-D-ribosyl)imidazole-4-carboxamide = 5-formamido-1-(5-phospho-D-ribosyl)imidazole-4-carboxamide + (6S)-5,6,7,8-tetrahydrofolate. It carries out the reaction IMP + H2O = 5-formamido-1-(5-phospho-D-ribosyl)imidazole-4-carboxamide. The protein operates within purine metabolism; IMP biosynthesis via de novo pathway; 5-formamido-1-(5-phospho-D-ribosyl)imidazole-4-carboxamide from 5-amino-1-(5-phospho-D-ribosyl)imidazole-4-carboxamide (10-formyl THF route): step 1/1. Its pathway is purine metabolism; IMP biosynthesis via de novo pathway; IMP from 5-formamido-1-(5-phospho-D-ribosyl)imidazole-4-carboxamide: step 1/1. This Xanthomonas oryzae pv. oryzae (strain MAFF 311018) protein is Bifunctional purine biosynthesis protein PurH.